Consider the following 152-residue polypeptide: Transcriptional regulator MraZ (152 aa).

2 SpoVT-AbrB domains span residues 5-52 and 81-124; these read ASAI…PFDE and AHEC…DETA.

The protein belongs to the MraZ family. In terms of assembly, forms oligomers.

Its subcellular location is the cytoplasm. The protein resides in the nucleoid. This is Transcriptional regulator MraZ from Shewanella sediminis (strain HAW-EB3).